The sequence spans 344 residues: F17a-G fimbrial adhesin (344 aa).

The N-terminal stretch at 1 to 22 (MTNFYKVFLAVFILVCCNISQA) is a signal peptide. Residues 23–199 (AVSFIGSTEN…SLNPFTLNDT (177 aa)) are receptor-binding lectin domain. Residues 65-66 (AN), 110-111 (DT), and 139-142 (STQG) contribute to the a carbohydrate site. Cys75 and Cys132 form a disulfide bridge. Positions 200 to 344 (VTSCRLLTPS…GISTFTFSYQ (145 aa)) are fimbrillin-binding domain. The tract at residues 288 to 308 (LKFGPDSPVKGNENQWQLSTG) is disordered. The segment covering 299–308 (NENQWQLSTG) has biased composition (polar residues).

The protein belongs to the fimbrial protein family.

It is found in the fimbrium. Essential fimbrial adhesion factor that mediates binding to N-acetylglucosamine-containing receptors in the host intestinal microvilli, leading to colonization of the intestinal tissue, and diarrhea or septicemia. Also confers adhesiveness to laminin and basement membranes. The chain is F17a-G fimbrial adhesin (f17aG) from Escherichia coli.